The following is a 431-amino-acid chain: UDP-N-acetylmuramoylalanine--D-glutamate ligase (431 aa).

Residue 111 to 117 (GTDGKST) coordinates ATP.

It belongs to the MurCDEF family.

The protein resides in the cytoplasm. The enzyme catalyses UDP-N-acetyl-alpha-D-muramoyl-L-alanine + D-glutamate + ATP = UDP-N-acetyl-alpha-D-muramoyl-L-alanyl-D-glutamate + ADP + phosphate + H(+). It participates in cell wall biogenesis; peptidoglycan biosynthesis. In terms of biological role, cell wall formation. Catalyzes the addition of glutamate to the nucleotide precursor UDP-N-acetylmuramoyl-L-alanine (UMA). This is UDP-N-acetylmuramoylalanine--D-glutamate ligase from Petrotoga mobilis (strain DSM 10674 / SJ95).